Consider the following 227-residue polypeptide: Phosphoribosylaminoimidazole-succinocarboxamide synthase (227 aa).

It belongs to the SAICAR synthetase family.

It carries out the reaction 5-amino-1-(5-phospho-D-ribosyl)imidazole-4-carboxylate + L-aspartate + ATP = (2S)-2-[5-amino-1-(5-phospho-beta-D-ribosyl)imidazole-4-carboxamido]succinate + ADP + phosphate + 2 H(+). It functions in the pathway purine metabolism; IMP biosynthesis via de novo pathway; 5-amino-1-(5-phospho-D-ribosyl)imidazole-4-carboxamide from 5-amino-1-(5-phospho-D-ribosyl)imidazole-4-carboxylate: step 1/2. The chain is Phosphoribosylaminoimidazole-succinocarboxamide synthase from Clostridium tetani (strain Massachusetts / E88).